The following is a 304-amino-acid chain: Nod factor export ATP-binding protein I (304 aa).

The region spanning 6 to 236 is the ABC transporter domain; that stretch reads IDFRNVEKRY…EIGCDVIEIY (231 aa). Position 38-45 (38-45) interacts with ATP; it reads GPNGAGKT.

This sequence belongs to the ABC transporter superfamily. Lipooligosaccharide exporter (TC 3.A.1.102) family. As to quaternary structure, the complex is composed of two ATP-binding proteins (NodI) and two transmembrane proteins (NodJ).

It localises to the cell inner membrane. Its function is as follows. Part of the ABC transporter complex NodIJ involved in the export of the nodulation factors (Nod factors), the bacterial signal molecules that induce symbiosis and subsequent nodulation induction. Nod factors are LCO (lipo-chitin oligosaccharide), a modified beta-1,4-linked N-acetylglucosamine oligosaccharide. This subunit is responsible for energy coupling to the transport system. The sequence is that of Nod factor export ATP-binding protein I from Burkholderia orbicola (strain AU 1054).